The chain runs to 916 residues: Protein translocase subunit SecA (916 aa).

Residues Gln-87, 105–109 (GEGKT), and Asp-507 contribute to the ATP site. Zn(2+) is bound by residues Cys-900, Cys-902, Cys-911, and His-912.

It belongs to the SecA family. As to quaternary structure, monomer and homodimer. Part of the essential Sec protein translocation apparatus which comprises SecA, SecYEG and auxiliary proteins SecDF-YajC and YidC. The cofactor is Zn(2+).

The protein resides in the cell inner membrane. Its subcellular location is the cytoplasm. The catalysed reaction is ATP + H2O + cellular proteinSide 1 = ADP + phosphate + cellular proteinSide 2.. Its function is as follows. Part of the Sec protein translocase complex. Interacts with the SecYEG preprotein conducting channel. Has a central role in coupling the hydrolysis of ATP to the transfer of proteins into and across the cell membrane, serving both as a receptor for the preprotein-SecB complex and as an ATP-driven molecular motor driving the stepwise translocation of polypeptide chains across the membrane. This chain is Protein translocase subunit SecA, found in Neisseria meningitidis serogroup B (strain ATCC BAA-335 / MC58).